The following is a 607-amino-acid chain: Aspartate--tRNA(Asp/Asn) ligase (607 aa).

Residue E168 coordinates L-aspartate. The interval 192–195 is aspartate; the sequence is QLFK. R214 is an L-aspartate binding site. Residues 214–216 and Q223 contribute to the ATP site; that span reads RDE. L-aspartate is bound at residue H449. E483 lines the ATP pocket. R490 contacts L-aspartate. An ATP-binding site is contributed by 535-538; sequence GWDR. Positions 578–607 are disordered; that stretch reads LEAGVDARPKPEARAQAGTAGPAAPVADPT. Residues 580-590 show a composition bias toward basic and acidic residues; sequence AGVDARPKPEA. Over residues 591-607 the composition is skewed to low complexity; that stretch reads RAQAGTAGPAAPVADPT.

This sequence belongs to the class-II aminoacyl-tRNA synthetase family. Type 1 subfamily. In terms of assembly, homodimer.

Its subcellular location is the cytoplasm. It carries out the reaction tRNA(Asx) + L-aspartate + ATP = L-aspartyl-tRNA(Asx) + AMP + diphosphate. Its function is as follows. Aspartyl-tRNA synthetase with relaxed tRNA specificity since it is able to aspartylate not only its cognate tRNA(Asp) but also tRNA(Asn). Reaction proceeds in two steps: L-aspartate is first activated by ATP to form Asp-AMP and then transferred to the acceptor end of tRNA(Asp/Asn). In Salinispora tropica (strain ATCC BAA-916 / DSM 44818 / JCM 13857 / NBRC 105044 / CNB-440), this protein is Aspartate--tRNA(Asp/Asn) ligase.